Consider the following 166-residue polypeptide: Photosystem I assembly protein Ycf3 (166 aa).

3 TPR repeats span residues 35 to 68, 72 to 105, and 120 to 153; these read AFVYYRDGMSAQAEGEYAEALQNYAQAMRLEVDP, SFIFYNIGLIHTSNGEHTKALEYYYQALDRNPSL, and GEQALAAGNIPDSETLFEKAAEYWKEAIRLAPLN.

This sequence belongs to the Ycf3 family.

It is found in the plastid. The protein resides in the chloroplast thylakoid membrane. Its function is as follows. Essential for the assembly of the photosystem I (PSI) complex. May act as a chaperone-like factor to guide the assembly of the PSI subunits. The protein is Photosystem I assembly protein Ycf3 of Ostreococcus tauri.